The primary structure comprises 321 residues: Low affinity immunoglobulin epsilon Fc receptor (321 aa).

The Cytoplasmic portion of the chain corresponds to Met-1–Gly-21. S-palmitoyl cysteine attachment occurs at residues Cys-17 and Cys-18. A helical; Signal-anchor for type II membrane protein transmembrane segment spans residues Thr-22 to Trp-47. Residues Asp-48–Ser-321 are Extracellular-facing. Asn-63 carries an N-linked (GlcNAc...) asparagine glycan. The segment at Gln-66–Ser-85 is disordered. 3 repeats span residues Lys-69–Ser-89, Gln-90–Ser-110, and Trp-111–Arg-131. Cystine bridges form between Cys-160/Cys-288, Cys-163/Cys-174, Cys-191/Cys-282, and Cys-259/Cys-273. The C-type lectin domain occupies Thr-162–Arg-284. Positions 249, 251, 269, and 270 each coordinate Ca(2+). The interval Pro-290 to Ser-321 is disordered. Residue Ser-296 is glycosylated (O-linked (Xyl...) (chondroitin sulfate) serine).

Homotrimer. Interacts (via C-type lectin domain) with IGHE (via CH3 region); this interaction regulates IgE homeostasis. Interacts (via the C-terminus) with CR2/CD21 (via Sushi domain 1 and 2). In terms of processing, N- and O-glycosylated. Post-translationally, the secreted form sCD23 is produced by ADAM10-mediated ectodomain shedding. As to expression, detected in urine (at protein level).

It is found in the cell membrane. It localises to the secreted. Its function is as follows. Low-affinity receptor for immunoglobulin E (IgE) and CR2/CD21. Has essential roles in the regulation of IgE production and in the differentiation of B cells. On B cells, initiates IgE-dependent antigen uptake and presentation to T cells. On macrophages, upon IgE binding and antigen cross-linking induces intracellular killing of parasites through activation of L-Arginine-nitric oxide pathway. In Homo sapiens (Human), this protein is Low affinity immunoglobulin epsilon Fc receptor (FCER2).